Reading from the N-terminus, the 129-residue chain is Cortical cell-delineating protein (129 aa).

Positions 1–19 (MAPKVALFLALSLLFAATA) form a signal peptide, or 21. N25 carries N-linked (GlcNAc...) asparagine glycosylation. A run of 2 repeats spans residues 29–34 (PVVPTP) and 35–40 (PVVPTP). The tract at residues 29–40 (PVVPTPPVVPTP) is 2 X 6 AA tandem repeats of P-V-V-P-T-P.

It to carrot DC2.15 and PEMB3. As to expression, cortical ground meristem of developing roots.

Its function is as follows. Delineates a novel subset of developing cortical cells. It is probably involved in some aspect of transport of molecules to or from the vasculature. This Zea mays (Maize) protein is Cortical cell-delineating protein.